The primary structure comprises 306 residues: Homeobox protein Hox-C13a (306 aa).

The segment at residues 236-295 (GRKKRVPYTKIQLKELEKEYAASKFITKDKRRRISATTNLSERQVTIWFQNRRVKEKKFV) is a DNA-binding region (homeobox).

The protein belongs to the Abd-B homeobox family.

The protein resides in the nucleus. Its function is as follows. Sequence-specific transcription factor which is part of a developmental regulatory system that provides cells with specific positional identities on the anterior-posterior axis. This is Homeobox protein Hox-C13a (hoxc13a) from Danio rerio (Zebrafish).